The following is a 92-amino-acid chain: Small ribosomal subunit protein uS19 (92 aa).

The protein belongs to the universal ribosomal protein uS19 family.

Functionally, protein S19 forms a complex with S13 that binds strongly to the 16S ribosomal RNA. This Francisella philomiragia subsp. philomiragia (strain ATCC 25017 / CCUG 19701 / FSC 153 / O#319-036) protein is Small ribosomal subunit protein uS19.